Reading from the N-terminus, the 936-residue chain is Protein SIEL (936 aa).

Interacts with SHR, MGP, SCR, JKD, CPC, TMO7 and AGL21, but not with LFY or STM.

The protein resides in the nucleus. It is found in the endosome. Its subcellular location is the cytoplasm. It localises to the cell cortex. In terms of biological role, intracellular shuttle that promotes movement of SHR from the stele into the endodermis. Required for SHR association to endosomes and localization, and for intercellular movement of SHR. In Arabidopsis thaliana (Mouse-ear cress), this protein is Protein SIEL.